The sequence spans 351 residues: Protein RecA (351 aa).

73–80 (GPESSGKT) contacts ATP.

The protein belongs to the RecA family.

It is found in the cytoplasm. Its function is as follows. Can catalyze the hydrolysis of ATP in the presence of single-stranded DNA, the ATP-dependent uptake of single-stranded DNA by duplex DNA, and the ATP-dependent hybridization of homologous single-stranded DNAs. It interacts with LexA causing its activation and leading to its autocatalytic cleavage. This is Protein RecA from Oleidesulfovibrio alaskensis (strain ATCC BAA-1058 / DSM 17464 / G20) (Desulfovibrio alaskensis).